The following is a 179-amino-acid chain: Lipoprotein signal peptidase (179 aa).

Transmembrane regions (helical) follow at residues 10 to 30 (LFQF…AIII), 48 to 68 (VPVL…AFSF), 75 to 95 (WQHY…IFWL), and 101 to 121 (NAMI…GNLI). Residues aspartate 131 and aspartate 149 contribute to the active site. The helical transmembrane segment at 141-161 (HFPAFNIADSAITIGTILLLI) threads the bilayer.

The protein belongs to the peptidase A8 family.

The protein localises to the cell inner membrane. The catalysed reaction is Release of signal peptides from bacterial membrane prolipoproteins. Hydrolyzes -Xaa-Yaa-Zaa-|-(S,diacylglyceryl)Cys-, in which Xaa is hydrophobic (preferably Leu), and Yaa (Ala or Ser) and Zaa (Gly or Ala) have small, neutral side chains.. It functions in the pathway protein modification; lipoprotein biosynthesis (signal peptide cleavage). Its function is as follows. This protein specifically catalyzes the removal of signal peptides from prolipoproteins. In Acinetobacter baylyi (strain ATCC 33305 / BD413 / ADP1), this protein is Lipoprotein signal peptidase.